Consider the following 153-residue polypeptide: UPF0178 protein Sfum_1097 (153 aa).

The protein belongs to the UPF0178 family.

The chain is UPF0178 protein Sfum_1097 from Syntrophobacter fumaroxidans (strain DSM 10017 / MPOB).